Here is a 164-residue protein sequence, read N- to C-terminus: Protein-export protein SecB (164 aa).

The protein belongs to the SecB family. Homotetramer, a dimer of dimers. One homotetramer interacts with 1 SecA dimer.

It localises to the cytoplasm. One of the proteins required for the normal export of preproteins out of the cell cytoplasm. It is a molecular chaperone that binds to a subset of precursor proteins, maintaining them in a translocation-competent state. It also specifically binds to its receptor SecA. The chain is Protein-export protein SecB from Janthinobacterium sp. (strain Marseille) (Minibacterium massiliensis).